The following is a 433-amino-acid chain: Urokinase-type plasminogen activator (433 aa).

Residues 1 to 20 (MRALLAHLLLCVLVVSASKG) form the signal peptide. Residues 26–62 (VPSDCGCLNGGTCMSNKYFSSIHWCNCPKKFGGQHCE) enclose the EGF-like domain. 6 disulfide bridges follow: C30/C38, C32/C50, C52/C61, C69/C150, C90/C132, and C121/C145. Residues 33–56 (LNGGTCMSNKYFSSIHWCNCPKKF) are binds urokinase plasminogen activator surface receptor. A Kringle domain is found at 69–150 (CYEGNGHFYR…RVQECMVHNC (82 aa)). Positions 151 to 177 (ADGKKPSSPPEELQFQCGQRTLRPRFK) are connecting peptide. At S157 the chain carries Phosphoserine. Cystine bridges form between C167/C298, C208/C224, C216/C287, C315/C384, C347/C363, and C374/C402. The Peptidase S1 domain occupies 178–426 (IVGGEFTTIE…FLPWIHSHTR (249 aa)). Catalysis depends on charge relay system residues H223 and D274. N324 carries N-linked (GlcNAc...) asparagine glycosylation. S325 carries the post-translational modification Phosphoserine. Catalysis depends on S378, which acts as the Charge relay system.

This sequence belongs to the peptidase S1 family. In terms of assembly, found in high and low molecular mass forms. Each consists of two chains, A and B. The high molecular mass form contains a long chain A which is cleaved to yield a short chain A. Forms heterodimer with SERPINA5. Binds LRP1B; binding is followed by internalization and degradation. Interacts with MRC2. Interacts with PLAUR. In complex with SERPINE1, interacts with PLAUR/uPAR. Interacts with SORL1 and LRP1, either alone or in complex with SERPINE1; these interactions are abolished in the presence of LRPAP1/RAP. The ternary complex composed of PLAUR-PLAU-PAI1 also interacts with SORLA. Phosphorylation of Ser-157 and Ser-325 abolishes proadhesive ability but does not interfere with receptor binding. Post-translationally, produced as an inactive single-chain protein (pro-uPA or sc-uPA), is processed into the active disulfide-linked two-chain form of PLAU/uPA by a proteolytic event mediated, at least, by TMPRSS4.

The protein localises to the secreted. The catalysed reaction is Specific cleavage of Arg-|-Val bond in plasminogen to form plasmin.. Inhibited by SERPINA5. Inhibited by SERPINE1. In terms of biological role, specifically cleaves the zymogen plasminogen to form the active enzyme plasmin. This chain is Urokinase-type plasminogen activator (PLAU), found in Papio cynocephalus (Yellow baboon).